A 309-amino-acid polypeptide reads, in one-letter code: MAGFYGRDIISVRDLDRQALEEVFRYTEKFVKMTPSERRSVAGGRTLGYLFYEPSTRTRLSFQAAMASAGGTSLGIADVSSSSIQKGESLADTVRMMAMYSDALVLRHPLDGSSRFAAEVSDKPVINAGSGTEEHPTQAIQDLFTIRREKGGIDGLNIGVVGDLKYGRTVYSLLHALGNYDVKVSLISPEPLRIRTDSIYDIRTKLDFAESESLDEYVDELDVVYVTRIQKERFPDEEEYLKVKGSYVIGLDMLRKMKDGAIILHPLPRLDEISGEVDGTDKAKYFVQAEYGVYTRAALLGLVLNEGGF.

2 residues coordinate carbamoyl phosphate: arginine 57 and threonine 58. An L-aspartate-binding site is contributed by lysine 86. Positions 107, 135, and 138 each coordinate carbamoyl phosphate. Residues arginine 168 and arginine 228 each contribute to the L-aspartate site. Residues leucine 267 and proline 268 each coordinate carbamoyl phosphate.

It belongs to the aspartate/ornithine carbamoyltransferase superfamily. ATCase family. In terms of assembly, heterooligomer of catalytic and regulatory chains.

The enzyme catalyses carbamoyl phosphate + L-aspartate = N-carbamoyl-L-aspartate + phosphate + H(+). Its pathway is pyrimidine metabolism; UMP biosynthesis via de novo pathway; (S)-dihydroorotate from bicarbonate: step 2/3. Functionally, catalyzes the condensation of carbamoyl phosphate and aspartate to form carbamoyl aspartate and inorganic phosphate, the committed step in the de novo pyrimidine nucleotide biosynthesis pathway. In Cenarchaeum symbiosum (strain A), this protein is Aspartate carbamoyltransferase catalytic subunit.